The sequence spans 66 residues: Translational regulator CsrA (66 aa).

It belongs to the CsrA/RsmA family. As to quaternary structure, homodimer; the beta-strands of each monomer intercalate to form a hydrophobic core, while the alpha-helices form wings that extend away from the core.

The protein localises to the cytoplasm. Functionally, a key translational regulator that binds mRNA to regulate translation initiation and/or mRNA stability. Mediates global changes in gene expression, shifting from rapid growth to stress survival by linking envelope stress, the stringent response and the catabolite repression systems. Usually binds in the 5'-UTR; binding at or near the Shine-Dalgarno sequence prevents ribosome-binding, repressing translation, binding elsewhere in the 5'-UTR can activate translation and/or stabilize the mRNA. Its function is antagonized by small RNA(s). This chain is Translational regulator CsrA, found in Alkalilimnicola ehrlichii (strain ATCC BAA-1101 / DSM 17681 / MLHE-1).